The following is a 176-amino-acid chain: Protein Dr1 (176 aa).

At alanine 2 the chain carries N-acetylalanine. The 64-residue stretch at 12 to 75 folds into the Histone-fold domain; that stretch reads TIPRAAINKM…ISPEHVIQAL (64 aa). The Nuclear localization signal signature appears at 100–103; it reads KRRK. Phosphoserine occurs at positions 105, 106, 166, and 167. Residues 152–167 are compositionally biased toward low complexity; sequence QLAAASASASNQAGSS. Residues 152–176 are disordered; sequence QLAAASASASNQAGSSQDEEDDDDI.

Belongs to the NC2 beta/DR1 family. As to quaternary structure, heterodimer with DRAP1. DR1 exists in solution as a homotetramer that dissociates during interaction with TBP and then, after complexing with TBP, reassociates at a slow rate, to reconstitute the tetramer. Interacts with NFIL3. Component of the ADA2A-containing complex (ATAC), composed of KAT14, KAT2A, TADA2L, TADA3L, ZZ3, MBIP, WDR5, YEATS2, CCDC101 and DR1. Post-translationally, phosphorylation regulates its interaction with TBP. Not phosphorylated when bound to DRAP1.

Its subcellular location is the nucleus. Functionally, the association of the DR1/DRAP1 heterodimer with TBP results in a functional repression of both activated and basal transcription of class II genes. This interaction precludes the formation of a transcription-competent complex by inhibiting the association of TFIIA and/or TFIIB with TBP. Can bind to DNA on its own. Component of the ATAC complex, a complex with histone acetyltransferase activity on histones H3 and H4. The chain is Protein Dr1 (DR1) from Homo sapiens (Human).